The following is a 668-amino-acid chain: DNA ligase (668 aa).

NAD(+)-binding positions include Asp-34–Asp-38, Ser-83–Leu-84, and Glu-113. Catalysis depends on Lys-115, which acts as the N6-AMP-lysine intermediate. The NAD(+) site is built by Arg-136, Glu-170, Lys-286, and Lys-310. Residues Cys-404, Cys-407, Cys-422, and Cys-427 each contribute to the Zn(2+) site. In terms of domain architecture, BRCT spans Asp-590–Lys-668.

This sequence belongs to the NAD-dependent DNA ligase family. LigA subfamily. It depends on Mg(2+) as a cofactor. Requires Mn(2+) as cofactor.

It catalyses the reaction NAD(+) + (deoxyribonucleotide)n-3'-hydroxyl + 5'-phospho-(deoxyribonucleotide)m = (deoxyribonucleotide)n+m + AMP + beta-nicotinamide D-nucleotide.. Functionally, DNA ligase that catalyzes the formation of phosphodiester linkages between 5'-phosphoryl and 3'-hydroxyl groups in double-stranded DNA using NAD as a coenzyme and as the energy source for the reaction. It is essential for DNA replication and repair of damaged DNA. This chain is DNA ligase, found in Bacillus subtilis (strain 168).